The sequence spans 281 residues: Phosphatidylglycerol--prolipoprotein diacylglyceryl transferase (281 aa).

7 helical membrane-spanning segments follow: residues 11 to 31, 57 to 77, 89 to 109, 121 to 141, 194 to 214, 222 to 242, and 255 to 275; these read IIFT…VISF, LLYA…IIFY, VFYI…AIIV, ILEI…AGRI, PTQL…IYFF, GSIS…IEFF, and IITM…IIMY. Arg140 contributes to the a 1,2-diacyl-sn-glycero-3-phospho-(1'-sn-glycerol) binding site.

Belongs to the Lgt family.

Its subcellular location is the cell inner membrane. It carries out the reaction L-cysteinyl-[prolipoprotein] + a 1,2-diacyl-sn-glycero-3-phospho-(1'-sn-glycerol) = an S-1,2-diacyl-sn-glyceryl-L-cysteinyl-[prolipoprotein] + sn-glycerol 1-phosphate + H(+). Its pathway is protein modification; lipoprotein biosynthesis (diacylglyceryl transfer). Functionally, catalyzes the transfer of the diacylglyceryl group from phosphatidylglycerol to the sulfhydryl group of the N-terminal cysteine of a prolipoprotein, the first step in the formation of mature lipoproteins. This chain is Phosphatidylglycerol--prolipoprotein diacylglyceryl transferase, found in Buchnera aphidicola subsp. Acyrthosiphon pisum (strain Tuc7).